The chain runs to 334 residues: G-protein coupled receptor 12 (334 aa).

Residues 1–48 (MNEDPKVNLSGLPRDCIEAGTPENISAAVPSQGSVVESEPELVVNPWD) lie on the Extracellular side of the membrane. Residues N8 and N24 are each glycosylated (N-linked (GlcNAc...) asparagine). Residues 49–69 (IVLCSSGTLICCENAVVVLII) traverse the membrane as a helical segment. Topologically, residues 70-78 (FHSPSLRAP) are cytoplasmic. Residues 79–99 (MFLLIGSLALADLLAGLGLII) form a helical membrane-spanning segment. The Extracellular segment spans residues 100 to 113 (NFVFAYLLQSEATK). Residues 114–134 (LVTIGLIVASFSASVCSLLAI) form a helical membrane-spanning segment. Residues 135–158 (TVDRYLSLYYALTYHSERTVTFTY) are Cytoplasmic-facing. A helical membrane pass occupies residues 159 to 179 (VMLVMLWGTSTCLGLLPVMGW). At 180–199 (NCLRDESTCSVVRPLTKNNA) the chain is on the extracellular side. Residues 200–220 (AILSISFLFMFALMLQLYIQI) traverse the membrane as a helical segment. At 221–252 (CKIVMRHAHQIALQHHFLATSHYVTTRKGIST) the chain is on the cytoplasmic side. The chain crosses the membrane as a helical span at residues 253-273 (LALILGTFAACWMPFTLYSLI). Topologically, residues 274–282 (ADYTYPSIY) are extracellular. Residues 283–303 (TYATLLPATYNSIINPVIYAF) traverse the membrane as a helical segment. At 304–334 (RNQEIQKALCLICCGCIPNTLSQRARSPSDV) the chain is on the cytoplasmic side. The S-palmitoyl cysteine moiety is linked to residue C317. Phosphoserine occurs at positions 330 and 332.

It belongs to the G-protein coupled receptor 1 family. As to expression, expressed in the brain, pituitary gland and testis.

Its subcellular location is the cell membrane. Its function is as follows. Receptor with constitutive G(s) signaling activity that activates cyclic AMP. Promotes neurite outgrowth and blocks myelin inhibition in neurons. The protein is G-protein coupled receptor 12 (Gpr12) of Rattus norvegicus (Rat).